Reading from the N-terminus, the 278-residue chain is MNYILIGVILGIVQGISEWIPISSKTQVLIVSSTLLGLSFNVAYSFGLFMEIGTIAAAIFYFRSEISGLLKALVRMSSRREDYLLLKFLVIVTIITGLVGVPLYLFVISLPILGLPMTVLGVVLLIDGIVIYLSRKNYFPRKGLHDLKLRDIIIVGIAQGLAALPGVSRSGMTTSALILLGVKPEEAFKLSFISLIPAALGAISVTVLFSKHEVSQAVHSVSLSGLLISIVVATFVSIFFINALLRFARTNKVVLLVIILGIMAIISGILSDIAKGFY.

Transmembrane regions (helical) follow at residues 3 to 23 (YILI…IPIS), 42 to 62 (VAYS…IFYF), 88 to 108 (FLVI…LFVI), 112 to 132 (ILGL…IVIY), 152 to 172 (IIIV…RSGM), 190 to 210 (LSFI…VLFS), 225 to 245 (GLLI…NALL), and 253 to 273 (VVLL…LSDI).

Belongs to the UppP family.

The protein localises to the cell membrane. It catalyses the reaction di-trans,octa-cis-undecaprenyl diphosphate + H2O = di-trans,octa-cis-undecaprenyl phosphate + phosphate + H(+). Its function is as follows. Catalyzes the dephosphorylation of undecaprenyl diphosphate (UPP). This Saccharolobus solfataricus (strain ATCC 35092 / DSM 1617 / JCM 11322 / P2) (Sulfolobus solfataricus) protein is Undecaprenyl-diphosphatase.